The chain runs to 340 residues: Hydroxyurea phosphotransferase (340 aa).

D240 (proton acceptor) is an active-site residue.

Belongs to the aminoglycoside phosphotransferase family.

In terms of biological role, potential phosphotransferase that inactivates hydroxyurea by phosphorylation of the hydroxy group in the hydroxylamine moiety. The polypeptide is Hydroxyurea phosphotransferase (hur) (Kitasatospora aureofaciens (Streptomyces aureofaciens)).